We begin with the raw amino-acid sequence, 281 residues long: Putative glutamine amidotransferase-like protein RP404 (281 aa).

A Glutamine amidotransferase type-1 domain is found at 19–281 (KYTYADFPWY…KALVKASKYI (263 aa)). The region spanning 139–174 (RHFSKLTYSKKFECNTEAFATTVYTLPIKLEFENAP) is the RPE1 insert domain.

This chain is Putative glutamine amidotransferase-like protein RP404, found in Rickettsia prowazekii (strain Madrid E).